Reading from the N-terminus, the 217-residue chain is Insulin-like growth factor 2.S (217 aa).

Residues 1–56 (MEQLSCKHRSSSVEAEAQLCRQTESRSTQLPRMSVMRHLFLLSITFLVYTLDSAKA) form the signal peptide. Residues 57 to 83 (YRATETLCGGELVDTLQFVCGDRGFYF) form a b region. 3 disulfides stabilise this stretch: Cys-64-Cys-103, Cys-76-Cys-116, and Cys-102-Cys-107. The interval 84-96 (STNNGRSNRRPNR) is c. Residues 97–117 (GIVDVCCFKSCDLELLETYCA) are a. The segment at 118–123 (KPTKNE) is d. A propeptide spans 124–217 (RDVSTAPATA…LQQASEPSHN (94 aa)) (e peptide).

It belongs to the insulin family.

It localises to the secreted. In terms of biological role, the insulin-like growth factors, isolated from plasma, are structurally and functionally related to insulin but have a much higher growth-promoting activity. Promotes anterior neural development. Acts as a ligand for integrin which is required for IGF2 signaling. This chain is Insulin-like growth factor 2.S, found in Xenopus laevis (African clawed frog).